The following is a 105-amino-acid chain: Pyruvate synthase subunit PorD (105 aa).

4Fe-4S ferredoxin-type domains are found at residues 44–73 (FKPEFHKDKCVRCFLCYIYCPEPAIYLDEE) and 74–103 (GYPVFDYDYCKGCGICANECPTKAIEMVRE). [4Fe-4S] cluster contacts are provided by cysteine 53, cysteine 56, cysteine 59, cysteine 63, cysteine 83, cysteine 86, cysteine 89, and cysteine 93.

Heterotetramer of one alpha, one beta, one delta and one gamma chain. The cofactor is [4Fe-4S] cluster.

This is Pyruvate synthase subunit PorD (porD) from Pyrococcus horikoshii (strain ATCC 700860 / DSM 12428 / JCM 9974 / NBRC 100139 / OT-3).